The chain runs to 89 residues: Large ribosomal subunit protein bL28 (89 aa).

It belongs to the bacterial ribosomal protein bL28 family.

This is Large ribosomal subunit protein bL28 from Chlamydia trachomatis serovar A (strain ATCC VR-571B / DSM 19440 / HAR-13).